Consider the following 187-residue polypeptide: Dihydrofolate reductase (187 aa).

A DHFR domain is found at 4–185 (PLNCIVAVSQ…IKYKFEVYEK (182 aa)). NADP(+) is bound by residues alanine 10 and 16–22 (GIGKNGD). 31–36 (EFKYFQ) is a binding site for substrate. Lysine 33 carries the post-translational modification N6-acetyllysine; alternate. The residue at position 33 (lysine 33) is an N6-succinyllysine; alternate. Residue 55–57 (RKT) coordinates NADP(+). The substrate site is built by asparagine 65 and arginine 71. Residues 77-79 (SRE) and 117-124 (GGSSVYQE) each bind NADP(+).

It belongs to the dihydrofolate reductase family. Homodimer.

It localises to the mitochondrion. Its subcellular location is the cytoplasm. It carries out the reaction (6S)-5,6,7,8-tetrahydrofolate + NADP(+) = 7,8-dihydrofolate + NADPH + H(+). Its pathway is cofactor biosynthesis; tetrahydrofolate biosynthesis; 5,6,7,8-tetrahydrofolate from 7,8-dihydrofolate: step 1/1. In terms of biological role, key enzyme in folate metabolism. Contributes to the de novo mitochondrial thymidylate biosynthesis pathway. Catalyzes an essential reaction for de novo glycine and purine synthesis, and for DNA precursor synthesis. Binds its own mRNA. The chain is Dihydrofolate reductase (Dhfr) from Mus musculus (Mouse).